Reading from the N-terminus, the 104-residue chain is 10 kDa heat shock protein, mitochondrial (104 aa).

Ser-81 carries the phosphoserine modification.

Belongs to the GroES chaperonin family. As to quaternary structure, homohexamer.

It localises to the mitochondrion matrix. Eukaryotic CPN10 homolog which is essential for mitochondrial protein biogenesis, together with CPN60. Binds to CPN60 in the presence of Mg-ATP and suppresses the ATPase activity of the latter. The chain is 10 kDa heat shock protein, mitochondrial (hsp10) from Schizosaccharomyces pombe (strain 972 / ATCC 24843) (Fission yeast).